A 121-amino-acid polypeptide reads, in one-letter code: Prismalin-14 (121 aa).

Residues Met1–Ala16 form the signal peptide. Gln17 is subject to Pyrrolidone carboxylic acid. 4 repeat units span residues Pro48–Arg51, Pro52–Arg55, Pro56–Tyr59, and Pro60–Ile63. The interval Pro48–Ile63 is 4 X 4 AA approximate tandem repeats of P-I-Y-R.

As to expression, expressed only at the mantle edge where it is found predominantly in the inner side of the outer mantle fold.

In terms of biological role, displays inhibitory activity against calcium carbonate precipitation, binds calcium and affects crystallization of calcium carbonate in vitro. May be involved in calcification of the prismatic layer of the shell. The sequence is that of Prismalin-14 from Pinctada fucata (Akoya pearl oyster).